The sequence spans 454 residues: Phosphoglucosamine mutase (454 aa).

Serine 104 serves as the catalytic Phosphoserine intermediate. Mg(2+) contacts are provided by serine 104, aspartate 241, aspartate 243, and aspartate 245. A Phosphoserine modification is found at serine 104.

Belongs to the phosphohexose mutase family. The cofactor is Mg(2+). Post-translationally, activated by phosphorylation.

The catalysed reaction is alpha-D-glucosamine 1-phosphate = D-glucosamine 6-phosphate. Catalyzes the conversion of glucosamine-6-phosphate to glucosamine-1-phosphate. The protein is Phosphoglucosamine mutase of Paenarthrobacter aurescens (strain TC1).